The following is a 561-amino-acid chain: Arginine--tRNA ligase (561 aa).

A 'HIGH' region motif is present at residues 129-139 (ANPTGPLHVGH).

Belongs to the class-I aminoacyl-tRNA synthetase family. In terms of assembly, monomer.

The protein resides in the cytoplasm. It carries out the reaction tRNA(Arg) + L-arginine + ATP = L-arginyl-tRNA(Arg) + AMP + diphosphate. This Bordetella petrii (strain ATCC BAA-461 / DSM 12804 / CCUG 43448) protein is Arginine--tRNA ligase.